The sequence spans 2345 residues: Acetyl-CoA carboxylase 1 (2345 aa).

Methionine 1 is subject to N-acetylmethionine. Phosphoserine is present on residues serine 5, serine 23, serine 25, serine 29, serine 34, serine 47, serine 49, and serine 52. Threonine 57 carries the post-translational modification Phosphothreonine. Serine 77 and serine 79 each carry phosphoserine. Residue serine 79 is modified to Phosphoserine; by AMPK. Positions valine 116 to alanine 617 constitute a Biotin carboxylation domain. In terms of domain architecture, ATP-grasp spans serine 274–methionine 465. An ATP-binding site is contributed by alanine 300–leucine 357. Glutamate 423, glutamate 436, and asparagine 438 together coordinate Mg(2+). Mn(2+)-binding residues include glutamate 423, glutamate 436, and asparagine 438. Arginine 440 is a catalytic residue. Threonine 609 carries the post-translational modification Phosphothreonine. The 75-residue stretch at phenylalanine 744–glutamine 818 folds into the Biotinyl-binding domain. Position 785 is an N6-biotinyllysine (lysine 785). A phosphoserine mark is found at serine 834, serine 1200, serine 1215, and serine 1217. Threonine 1226 carries the phosphothreonine modification. Serine 1258, serine 1262, and serine 1272 each carry phosphoserine. Residue lysine 1333 is modified to N6-acetyllysine. In terms of domain architecture, CoA carboxyltransferase N-terminal spans proline 1575–asparagine 1913. Residues proline 1575–asparagine 2233 form a carboxyltransferase region. Residues arginine 1822, lysine 2126, and arginine 2128 each coordinate CoA. The CoA carboxyltransferase C-terminal domain maps to proline 1917–asparagine 2233. Threonine 2152 is subject to Phosphothreonine.

As to quaternary structure, monomer, homodimer, and homotetramer. Can form filamentous polymers. Interacts in its inactive phosphorylated form with the BRCT domains of BRCA1 which prevents ACACA dephosphorylation and inhibits lipid synthesis. Interacts with MID1IP1; interaction with MID1IP1 promotes oligomerization and increases its activity. Mg(2+) serves as cofactor. Mn(2+) is required as a cofactor. Requires biotin as cofactor. In terms of processing, phosphorylation on Ser-1262 is required for interaction with BRCA1. Phosphorylation at Ser-79 by AMPK inactivates enzyme activity. Post-translationally, the biotin cofactor is covalently attached to the central biotinyl-binding domain and is required for the catalytic activity.

The protein resides in the cytoplasm. It localises to the cytosol. The enzyme catalyses hydrogencarbonate + acetyl-CoA + ATP = malonyl-CoA + ADP + phosphate + H(+). It participates in lipid metabolism; malonyl-CoA biosynthesis; malonyl-CoA from acetyl-CoA: step 1/1. Its activity is regulated as follows. Inhibited by phosphorylation. Citrate promotes oligomerization of the protein into filaments that correspond to the most active form of the carboxylase. Its function is as follows. Cytosolic enzyme that catalyzes the carboxylation of acetyl-CoA to malonyl-CoA, the first and rate-limiting step of de novo fatty acid biosynthesis. This is a 2 steps reaction starting with the ATP-dependent carboxylation of the biotin carried by the biotin carboxyl carrier (BCC) domain followed by the transfer of the carboxyl group from carboxylated biotin to acetyl-CoA. This Mus musculus (Mouse) protein is Acetyl-CoA carboxylase 1.